The primary structure comprises 352 residues: MTELELLGPRASGEPLGTAVLKAVAEDFQVDEVLDIPLSGQGEHLWLWVEKRDLNTEEAARRLARAAGVPVRSISYAGLKDRQALTRQWFSLHLPGKADPDLSRAEDASLRVLKQVRHLRKLQRGAHSANGFTLRLTALAADHQALDTRLEQLKQNGVPNYFGTQRFGHGGGNVHDALEWAARKALPEQRNVRSRLLSAGRSFLFNQLLAARVADGSWARAQVGDLLAFTDSRSFFPAGEAECADPRLAILDLHPTGPMWGEGASPAGAATAQLENAVGARQPALCQWLAQAGMDHERRILRLPIGGLTWHYPEPDILQLEFVLPAGCFATVVVREVVDLVSAGQTDSPCVF.

Residue D81 is the Nucleophile of the active site. A TRUD domain is found at 157–303 (GVPNYFGTQR…MDHERRILRL (147 aa)).

Belongs to the pseudouridine synthase TruD family.

The catalysed reaction is uridine(13) in tRNA = pseudouridine(13) in tRNA. Its function is as follows. Responsible for synthesis of pseudouridine from uracil-13 in transfer RNAs. The protein is tRNA pseudouridine synthase D of Pseudomonas putida (strain GB-1).